Reading from the N-terminus, the 303-residue chain is Coenzyme PQQ synthesis protein B (303 aa).

The protein belongs to the PqqB family.

It functions in the pathway cofactor biosynthesis; pyrroloquinoline quinone biosynthesis. May be involved in the transport of PQQ or its precursor to the periplasm. This Acinetobacter baumannii (strain ACICU) protein is Coenzyme PQQ synthesis protein B.